The sequence spans 644 residues: MMGGGLVMDQGMMFPGVHNFVDLLQQNGGDKNLGFGALVPQTSSGEQCVMGEGDLVDPPPESFPDAGEDDSDDDVEDIEELERRMWRDRMKLKRLKELQLSRGKDPAGGVVGDPSKPRQSQEQARRKKMSRAQDGILKYMLKMMEVCRAQGFVYGIIPEKGKPVSGASDNLRGWWKEKVRFDRNGPAAIAKYQADNAVPGFESELASGTGSPHSLQELQDTTLGSLLSALMQHCDPPQRRYPLEKGVPPPWWPTGDEEWWPELGIPKDQGPPPYKKPHDLKKAWKVSVLTAVIKHMSPDIEKIRRLVRQSKCLQDKMTAKEISTWLAVVKQEEELYLKLNPGARPPAPTGGITSAISFNASSSEYDVDVVDDCKGDEAGNQKAVVVADPTAFNLGAAMLNDKFLMPASMKEEATDVEFIQKRSASGAEPELMLNNRVYTCHNVQCPHSDYGYGFLDRNARNSHQYTCKYNDPLQQSTENKPSPPAIFPATYNTPNQALNNLDFGLPMDGQRSITELMNMYDNNFVANKNLSNDNATIMERPNAVNPRIQIEEGFFGQGSGIGGSNGGVFEDVNGMMQQPQQTTPAQQQFFIRDDTPFGNQMGDINGASEFRFGSGFNMSGAVEYPGAMQGQQKNDGASEFEELE.

2 disordered regions span residues 47-75 and 97-131; these read QCVM…DDDV and ELQL…KMSR. Residues 66–75 show a composition bias toward acidic residues; sequence AGEDDSDDDV.

This sequence belongs to the EIN3 family. As to expression, highly expressed in roots. Expressed at low levels in leaves and panicles.

The protein resides in the nucleus. Transcription factor acting as a positive regulator in the ethylene response pathway. Involved in wound signaling by binding specifically to the DNA sequence 5'-ATGTACCT-3' found in the promoter of some wound-inducible genes. Binds directly to the DNA sequence 5'-TGTTACAAATACC-3' in the promoter of the GA20OX2 gene to activate its expression at the transcriptional level during ethylene signaling. This chain is Protein ETHYLENE-INSENSITIVE 3-like 1b, found in Oryza sativa subsp. japonica (Rice).